Here is a 357-residue protein sequence, read N- to C-terminus: Holliday junction branch migration complex subunit RuvB (357 aa).

A compositionally biased stretch (low complexity) spans 1 to 15; sequence MAIQSDSLSSLPDSP. The segment at 1–30 is disordered; the sequence is MAIQSDSLSSLPDSPRIVAPQPVSPNEESI. Residues 13–195 are large ATPase domain (RuvB-L); that stretch reads DSPRIVAPQP…FGIVSRLEFY (183 aa). Residues leucine 34, arginine 35, glycine 76, lysine 79, threonine 80, threonine 81, 142 to 144, arginine 185, tyrosine 195, and arginine 232 each bind ATP; that span reads EDF. Threonine 80 contacts Mg(2+). A small ATPAse domain (RuvB-S) region spans residues 196–266; the sequence is NTDELARIVT…AAGRALAMLD (71 aa). The segment at 269 to 357 is head domain (RuvB-H); it reads PQGLDVMDRK…SGGTGELFSK (89 aa). DNA contacts are provided by arginine 305, arginine 324, and arginine 329.

It belongs to the RuvB family. As to quaternary structure, homohexamer. Forms an RuvA(8)-RuvB(12)-Holliday junction (HJ) complex. HJ DNA is sandwiched between 2 RuvA tetramers; dsDNA enters through RuvA and exits via RuvB. An RuvB hexamer assembles on each DNA strand where it exits the tetramer. Each RuvB hexamer is contacted by two RuvA subunits (via domain III) on 2 adjacent RuvB subunits; this complex drives branch migration. In the full resolvosome a probable DNA-RuvA(4)-RuvB(12)-RuvC(2) complex forms which resolves the HJ.

It localises to the cytoplasm. It carries out the reaction ATP + H2O = ADP + phosphate + H(+). The RuvA-RuvB-RuvC complex processes Holliday junction (HJ) DNA during genetic recombination and DNA repair, while the RuvA-RuvB complex plays an important role in the rescue of blocked DNA replication forks via replication fork reversal (RFR). RuvA specifically binds to HJ cruciform DNA, conferring on it an open structure. The RuvB hexamer acts as an ATP-dependent pump, pulling dsDNA into and through the RuvAB complex. RuvB forms 2 homohexamers on either side of HJ DNA bound by 1 or 2 RuvA tetramers; 4 subunits per hexamer contact DNA at a time. Coordinated motions by a converter formed by DNA-disengaged RuvB subunits stimulates ATP hydrolysis and nucleotide exchange. Immobilization of the converter enables RuvB to convert the ATP-contained energy into a lever motion, pulling 2 nucleotides of DNA out of the RuvA tetramer per ATP hydrolyzed, thus driving DNA branch migration. The RuvB motors rotate together with the DNA substrate, which together with the progressing nucleotide cycle form the mechanistic basis for DNA recombination by continuous HJ branch migration. Branch migration allows RuvC to scan DNA until it finds its consensus sequence, where it cleaves and resolves cruciform DNA. This Bordetella pertussis (strain Tohama I / ATCC BAA-589 / NCTC 13251) protein is Holliday junction branch migration complex subunit RuvB.